A 91-amino-acid chain; its full sequence is Early E3B 10.4 kDa protein (91 aa).

A signal peptide spans 1-22 (MIPRNFFFTILICAFNVCATFT). At 23–34 (AVATASPDCIGP) the chain is on the lumenal side. Residues 35–60 (FASYALFAFVTCICVCSIVCLVINFF) traverse the membrane as a helical segment. At 61–91 (QLVDWIFVRIAYLRHHPEYRNQNVAALLRLI) the chain is on the cytoplasmic side.

It belongs to the adenoviridae E3B family.

It localises to the host endoplasmic reticulum membrane. Functionally, down-regulates the EGF receptor. The protein is Early E3B 10.4 kDa protein of Homo sapiens (Human).